The primary structure comprises 316 residues: Transaldolase (316 aa).

The active-site Schiff-base intermediate with substrate is the lysine 131.

This sequence belongs to the transaldolase family. Type 1 subfamily. As to quaternary structure, homodimer.

Its subcellular location is the cytoplasm. The enzyme catalyses D-sedoheptulose 7-phosphate + D-glyceraldehyde 3-phosphate = D-erythrose 4-phosphate + beta-D-fructose 6-phosphate. It participates in carbohydrate degradation; pentose phosphate pathway; D-glyceraldehyde 3-phosphate and beta-D-fructose 6-phosphate from D-ribose 5-phosphate and D-xylulose 5-phosphate (non-oxidative stage): step 2/3. Transaldolase is important for the balance of metabolites in the pentose-phosphate pathway. The polypeptide is Transaldolase (Glaesserella parasuis serovar 5 (strain SH0165) (Haemophilus parasuis)).